The primary structure comprises 150 residues: Lipoprotein signal peptidase (150 aa).

2 consecutive transmembrane segments (helical) span residues 58–78 (FFIIVSIILILFLCYMIFKST) and 85–107 (SFSLIVGGAIGNLFDRIVKGYVV). Residues D108 and D122 contribute to the active site. Residues 117–137 (VFNLADFFITGGVLLLTFLIL) traverse the membrane as a helical segment.

This sequence belongs to the peptidase A8 family.

It is found in the cell membrane. The catalysed reaction is Release of signal peptides from bacterial membrane prolipoproteins. Hydrolyzes -Xaa-Yaa-Zaa-|-(S,diacylglyceryl)Cys-, in which Xaa is hydrophobic (preferably Leu), and Yaa (Ala or Ser) and Zaa (Gly or Ala) have small, neutral side chains.. It participates in protein modification; lipoprotein biosynthesis (signal peptide cleavage). This protein specifically catalyzes the removal of signal peptides from prolipoproteins. This Caldicellulosiruptor bescii (strain ATCC BAA-1888 / DSM 6725 / KCTC 15123 / Z-1320) (Anaerocellum thermophilum) protein is Lipoprotein signal peptidase.